Reading from the N-terminus, the 320-residue chain is Taste receptor type 2 member 109 (320 aa).

Residues 1–14 (MEHFLKSIFDISKN) are Extracellular-facing. The chain crosses the membrane as a helical span at residues 15-35 (VLPIILFIELIIGIIGNGFMA). Over 36-62 (LVHCMDWVKRKKMSLVNQILTTLATSR) the chain is Cytoplasmic. A helical transmembrane segment spans residues 63–83 (ICLLWFMLLGLLITLLDPDLA). Residues 84–94 (SARMMIQVASN) lie on the Extracellular side of the membrane. Residues 95 to 115 (LWIIANHMSIWLATCLTVFYF) traverse the membrane as a helical segment. Residues 116–135 (LKIANFSSSLFLYLKWRVEK) are Cytoplasmic-facing. The chain crosses the membrane as a helical span at residues 136–156 (VISVIFLVSLVLLFLNMLLMN). Residues 157–191 (LENDMCIAEYHQINISYSFIYHYRADCERRVLRLH) are Extracellular-facing. Residue asparagine 170 is glycosylated (N-linked (GlcNAc...) asparagine). The helical transmembrane segment at 192–212 (IIILSVPFVLSLPTFLLLIFS) threads the bilayer. Topologically, residues 213 to 240 (LWTHHKKMQQHVQGRRDASTTAHFKALQ) are cytoplasmic. The chain crosses the membrane as a helical span at residues 241-261 (TVIAFLLLYCIFILSMLLQFW). The Extracellular segment spans residues 262-270 (KYELMKKPL). A helical membrane pass occupies residues 271–291 (FILFCHIVYGAFPSFHSYVLI). The Cytoplasmic segment spans residues 292–320 (LGDMKLRQASLSVLLWLKCRPNYIETLDL).

It belongs to the G-protein coupled receptor T2R family.

It is found in the membrane. Its function is as follows. Putative taste receptor which may play a role in the perception of bitterness. The protein is Taste receptor type 2 member 109 of Rattus norvegicus (Rat).